We begin with the raw amino-acid sequence, 368 residues long: Nicotinamide/nicotinic acid mononucleotide adenylyltransferase (368 aa).

The span at 1–14 shows a compositional bias: polar residues; the sequence is MHTMNGDNFANSFP. Residues 1–25 are disordered; sequence MHTMNGDNFANSFPKNPLLSRNSSS. Position 36 is a phosphoserine (Ser-36). The disordered stretch occupies residues 47-78; it reads AKEHEERIRRPSVNRAWQKNSTSGGPSVSLEK. Over residues 61-72 the composition is skewed to polar residues; sequence RAWQKNSTSGGP. Phosphoserine occurs at positions 75 and 85. NAD(+) contacts are provided by Ser-135 and Phe-136. His-143 contacts ATP. 6 residues coordinate NAD(+): Thr-215, Gly-250, Asp-252, Trp-263, Arg-282, and Asn-313. 318 to 321 lines the ATP pocket; it reads TKVR.

This sequence belongs to the eukaryotic NMN adenylyltransferase family. A divalent metal cation is required as a cofactor.

It is found in the cytoplasm. The protein resides in the nucleus. It catalyses the reaction beta-nicotinamide D-ribonucleotide + ATP + H(+) = diphosphate + NAD(+). It carries out the reaction nicotinate beta-D-ribonucleotide + ATP + H(+) = deamido-NAD(+) + diphosphate. Its pathway is cofactor biosynthesis; NAD(+) biosynthesis; deamido-NAD(+) from nicotinate D-ribonucleotide: step 1/1. The protein operates within cofactor biosynthesis; NAD(+) biosynthesis; NAD(+) from nicotinamide D-ribonucleotide: step 1/1. In terms of biological role, catalyzes the formation of NAD(+) from nicotinamide mononucleotide (NMN) and ATP. Can also use the deamidated form; nicotinic acid mononucleotide (NaMN) as substrate to form deamido-NAD(+) (NaAD). Key enzyme in both de novo and salvage pathways for NAD(+) biosynthesis. The protein is Nicotinamide/nicotinic acid mononucleotide adenylyltransferase of Schizosaccharomyces pombe (strain 972 / ATCC 24843) (Fission yeast).